An 85-amino-acid polypeptide reads, in one-letter code: Neurotoxin beta-KTx 17 (85 aa).

The N-terminal stretch at 1–20 is a signal peptide; the sequence is MKQYIFFLALIVLVSTFAEA. A propeptide spanning residues 21 to 37 is cleaved from the precursor; that stretch reads GKKTEILDKVKKVFSKG. One can recognise a BetaSPN-type CS-alpha/beta domain in the interval 49–85; that stretch reads ELGCPFIEKWCEDHCESKKQVGKCENFDCSCVKLGGK. 3 cysteine pairs are disulfide-bonded: Cys52–Cys72, Cys59–Cys77, and Cys63–Cys79.

Belongs to the long chain scorpion toxin family. Class 2 subfamily. In terms of tissue distribution, expressed by the venom gland.

The protein resides in the secreted. In terms of biological role, has a very weak effect to block voltage-gated potassium channel Kv1.1/KCNA1. In Lychas mucronatus (Chinese swimming scorpion), this protein is Neurotoxin beta-KTx 17.